A 105-amino-acid chain; its full sequence is Probable molt-inhibiting hormone (105 aa).

Residues 1–28 (MYRMPMRFWLTAVVMVVVGALLLDTASA) form the signal peptide. Disulfide bonds link Cys35-Cys72, Cys52-Cys68, and Cys55-Cys81.

The protein belongs to the arthropod CHH/MIH/GIH/VIH hormone family. In terms of tissue distribution, expressed in the postmolt, intermolt, and premolt stages of the shrimp eyestalks and the brain.

It localises to the secreted. Inhibits Y-organs where molting hormone (ecdysteroid) is secreted. A molting cycle is initiated when MIH secretion diminishes or stops. The sequence is that of Probable molt-inhibiting hormone from Metapenaeus ensis (Greasyback shrimp).